Consider the following 876-residue polypeptide: Valine--tRNA ligase (876 aa).

The 'HIGH' region signature appears at 43-53 (PNVTGVLHMGH). A 'KMSKS' region motif is present at residues 532–536 (KMSKS). K535 provides a ligand contact to ATP. Coiled coils occupy residues 805-826 (GNMIDVDAEIARMEAELKHKEG) and 853-875 (RKKQADAESIIQSLKESIASLKN).

This sequence belongs to the class-I aminoacyl-tRNA synthetase family. ValS type 1 subfamily. In terms of assembly, monomer.

It is found in the cytoplasm. It catalyses the reaction tRNA(Val) + L-valine + ATP = L-valyl-tRNA(Val) + AMP + diphosphate. In terms of biological role, catalyzes the attachment of valine to tRNA(Val). As ValRS can inadvertently accommodate and process structurally similar amino acids such as threonine, to avoid such errors, it has a 'posttransfer' editing activity that hydrolyzes mischarged Thr-tRNA(Val) in a tRNA-dependent manner. This Bacteroides fragilis (strain ATCC 25285 / DSM 2151 / CCUG 4856 / JCM 11019 / LMG 10263 / NCTC 9343 / Onslow / VPI 2553 / EN-2) protein is Valine--tRNA ligase.